Here is a 284-residue protein sequence, read N- to C-terminus: Putative transcription factor kapC (284 aa).

The segment covering 1 to 10 has biased composition (pro residues); it reads MQPTLAPAPH. The segment at 1–121 is disordered; that stretch reads MQPTLAPAPH…NRAAQRAFRQ (121 aa). Positions 26–40 are enriched in low complexity; it reads HDQLLAAHQHLSHPQ. Residues 41–54 show a composition bias toward pro residues; the sequence is QPRPQPPAAQPPHM. The segment covering 57–67 has biased composition (polar residues); it reads NTTSPRDQNNI. One can recognise a bZIP domain in the interval 102–165; sequence PLSTSKRAAQ…EYIINLQSRL (64 aa). Residues 103–126 are basic motif; it reads LSTSKRAAQNRAAQRAFRQRKESY. Positions 108-118 are enriched in low complexity; that stretch reads RAAQNRAAQRA. Positions 130–161 are leucine-zipper; that stretch reads LEEQVKEFDTMSEAFKALQAENYQLREYIINL. A disordered region spans residues 174-284; it reads ELPGNIDLSQ…QAPHGLPMVS (111 aa). The span at 193–222 shows a compositional bias: low complexity; the sequence is PGAGPATTSSSAPAPPSGAQQAQPPQGAAS.

The protein belongs to the bZIP family.

Its subcellular location is the nucleus. In terms of biological role, putative transcription factor. This Aspergillus oryzae (strain ATCC 42149 / RIB 40) (Yellow koji mold) protein is Putative transcription factor kapC (kapC).